The sequence spans 707 residues: Polyribonucleotide nucleotidyltransferase (707 aa).

Positions 487 and 493 each coordinate Mg(2+). The KH domain maps to 554–613; that stretch reads PKILTMNINPDKIRDVIGPSGKQINKIIEDTGVKIDIEQDGTIFISSTDESSNQKAKKII. Residues 623–691 enclose the S1 motif domain; that stretch reads GQLYLGKVKR…KQGRVNLSRK (69 aa).

Belongs to the polyribonucleotide nucleotidyltransferase family. It depends on Mg(2+) as a cofactor.

Its subcellular location is the cytoplasm. The enzyme catalyses RNA(n+1) + phosphate = RNA(n) + a ribonucleoside 5'-diphosphate. Its function is as follows. Involved in mRNA degradation. Catalyzes the phosphorolysis of single-stranded polyribonucleotides processively in the 3'- to 5'-direction. This is Polyribonucleotide nucleotidyltransferase from Bacillus velezensis (strain DSM 23117 / BGSC 10A6 / LMG 26770 / FZB42) (Bacillus amyloliquefaciens subsp. plantarum).